A 335-amino-acid chain; its full sequence is Fructose-1,6-bisphosphatase class 1 (335 aa).

E92, D114, L116, and D117 together coordinate Mg(2+). Substrate is bound by residues 117-120 (DGSS) and N209. Mg(2+) is bound at residue E281.

Belongs to the FBPase class 1 family. As to quaternary structure, homotetramer. Requires Mg(2+) as cofactor.

It localises to the cytoplasm. The catalysed reaction is beta-D-fructose 1,6-bisphosphate + H2O = beta-D-fructose 6-phosphate + phosphate. The protein operates within carbohydrate biosynthesis; gluconeogenesis. The protein is Fructose-1,6-bisphosphatase class 1 of Nitrosococcus oceani (strain ATCC 19707 / BCRC 17464 / JCM 30415 / NCIMB 11848 / C-107).